A 79-amino-acid chain; its full sequence is Conotoxin 12 (79 aa).

The first 22 residues, 1–22, serve as a signal peptide directing secretion; it reads MKLTCVLIITVLFLTASQLITA. Positions 23-47 are excised as a propeptide; it reads DYSRDQRQYRAVRLGDEMRNFKGAR. Disulfide bonds link Cys49–Cys62, Cys56–Cys67, and Cys61–Cys77.

This sequence belongs to the conotoxin O1 superfamily. Expressed by the venom duct.

It is found in the secreted. The chain is Conotoxin 12 from Conus vexillum (Flag cone).